A 321-amino-acid polypeptide reads, in one-letter code: UDP-3-O-acylglucosamine N-acyltransferase (321 aa).

Residue histidine 231 is the Proton acceptor of the active site.

Belongs to the transferase hexapeptide repeat family. LpxD subfamily. In terms of assembly, homotrimer.

It carries out the reaction a UDP-3-O-[(3R)-3-hydroxyacyl]-alpha-D-glucosamine + a (3R)-hydroxyacyl-[ACP] = a UDP-2-N,3-O-bis[(3R)-3-hydroxyacyl]-alpha-D-glucosamine + holo-[ACP] + H(+). Its pathway is bacterial outer membrane biogenesis; LPS lipid A biosynthesis. Functionally, catalyzes the N-acylation of UDP-3-O-acylglucosamine using 3-hydroxyacyl-ACP as the acyl donor. Is involved in the biosynthesis of lipid A, a phosphorylated glycolipid that anchors the lipopolysaccharide to the outer membrane of the cell. This Campylobacter jejuni subsp. jejuni serotype O:2 (strain ATCC 700819 / NCTC 11168) protein is UDP-3-O-acylglucosamine N-acyltransferase.